A 152-amino-acid chain; its full sequence is Xanthine-guanine phosphoribosyltransferase (152 aa).

5-phospho-alpha-D-ribose 1-diphosphate contacts are provided by residues 37–38 (RG), R69, and 88–96 (DDLVDTGGT). GMP is bound at residue R69. Mg(2+) is bound at residue D89. Guanine is bound by residues D92 and I135. The xanthine site is built by D92 and I135. Residues 92–96 (DTGGT) and 134–135 (WI) each bind GMP.

This sequence belongs to the purine/pyrimidine phosphoribosyltransferase family. XGPT subfamily. Homotetramer. It depends on Mg(2+) as a cofactor.

It is found in the cell inner membrane. It carries out the reaction GMP + diphosphate = guanine + 5-phospho-alpha-D-ribose 1-diphosphate. It catalyses the reaction XMP + diphosphate = xanthine + 5-phospho-alpha-D-ribose 1-diphosphate. The enzyme catalyses IMP + diphosphate = hypoxanthine + 5-phospho-alpha-D-ribose 1-diphosphate. It participates in purine metabolism; GMP biosynthesis via salvage pathway; GMP from guanine: step 1/1. The protein operates within purine metabolism; XMP biosynthesis via salvage pathway; XMP from xanthine: step 1/1. Its function is as follows. Purine salvage pathway enzyme that catalyzes the transfer of the ribosyl-5-phosphate group from 5-phospho-alpha-D-ribose 1-diphosphate (PRPP) to the N9 position of the 6-oxopurines guanine and xanthine to form the corresponding ribonucleotides GMP (guanosine 5'-monophosphate) and XMP (xanthosine 5'-monophosphate), with the release of PPi. To a lesser extent, also acts on hypoxanthine. This Shigella boydii serotype 18 (strain CDC 3083-94 / BS512) protein is Xanthine-guanine phosphoribosyltransferase.